The following is a 240-amino-acid chain: Keratinocyte-associated protein 3 (240 aa).

The next 4 helical transmembrane spans lie at 21-41 (VGLA…VLHG), 63-83 (VISV…LLAS), 94-114 (VLLA…LGLL), and 163-183 (ALAL…LSGY).

It belongs to the TMEM54 family. As to expression, expressed in skin, pancreas and keratinocytes.

The protein resides in the membrane. This Homo sapiens (Human) protein is Keratinocyte-associated protein 3 (KRTCAP3).